The primary structure comprises 187 residues: ATP synthase subunit b, chloroplastic (187 aa).

A helical transmembrane segment spans residues 34–56; that stretch reads IINLSVVLGLVFTLGRNFLISLL.

Belongs to the ATPase B chain family. As to quaternary structure, F-type ATPases have 2 components, F(1) - the catalytic core - and F(0) - the membrane proton channel. F(1) has five subunits: alpha(3), beta(3), gamma(1), delta(1), epsilon(1). F(0) has four main subunits: a(1), b(1), b'(1) and c(10-14). The alpha and beta chains form an alternating ring which encloses part of the gamma chain. F(1) is attached to F(0) by a central stalk formed by the gamma and epsilon chains, while a peripheral stalk is formed by the delta, b and b' chains.

It localises to the plastid. Its subcellular location is the chloroplast thylakoid membrane. F(1)F(0) ATP synthase produces ATP from ADP in the presence of a proton or sodium gradient. F-type ATPases consist of two structural domains, F(1) containing the extramembraneous catalytic core and F(0) containing the membrane proton channel, linked together by a central stalk and a peripheral stalk. During catalysis, ATP synthesis in the catalytic domain of F(1) is coupled via a rotary mechanism of the central stalk subunits to proton translocation. In terms of biological role, component of the F(0) channel, it forms part of the peripheral stalk, linking F(1) to F(0). The sequence is that of ATP synthase subunit b, chloroplastic from Pleurastrum terricola (Filamentous green alga).